A 178-amino-acid polypeptide reads, in one-letter code: Large ribosomal subunit protein uL10 (178 aa).

This sequence belongs to the universal ribosomal protein uL10 family. Part of the ribosomal stalk of the 50S ribosomal subunit. The N-terminus interacts with L11 and the large rRNA to form the base of the stalk. The C-terminus forms an elongated spine to which L12 dimers bind in a sequential fashion forming a multimeric L10(L12)X complex.

Functionally, forms part of the ribosomal stalk, playing a central role in the interaction of the ribosome with GTP-bound translation factors. The sequence is that of Large ribosomal subunit protein uL10 from Salinibacter ruber (strain DSM 13855 / M31).